Here is a 128-residue protein sequence, read N- to C-terminus: Cholecystokinin B (128 aa).

An N-terminal signal peptide occupies residues 1–20 (MCSGVCICLLLAMLSASSKA). A propeptide spanning residues 21–108 (HQATGSLGED…FDQSHRINDR (88 aa)) is cleaved from the precursor. Residues 47-67 (YARASSAGQKKSFQRTDGDQR) are disordered. A Sulfotyrosine modification is found at Y110. The residue at position 116 (F116) is a Phenylalanine amide. A propeptide spanning residues 120–128 (SAEEYEYSS) is cleaved from the precursor.

It belongs to the gastrin/cholecystokinin family. Post-translationally, the precursor is cleaved by proteases to produce a number of active cholecystokinins. Brain and gastrointestinal tract.

The protein localises to the secreted. This chain is Cholecystokinin B (cck-b), found in Xenopus laevis (African clawed frog).